Here is a 406-residue protein sequence, read N- to C-terminus: 11-beta-hydroxysteroid dehydrogenase type 2 (406 aa).

82–111 (TRAVLITGCDSGFGKETAKKLDAMGFTVLA) is an NAD(+) binding site. Ser219 is a binding site for substrate. Catalysis depends on Tyr232, which acts as the Proton acceptor. Positions 379–406 (GQPGATPAPDTAQDNPNPNPDPSLVGAR) are disordered.

Belongs to the short-chain dehydrogenases/reductases (SDR) family. In terms of assembly, interacts with ligand-free cytoplasmic NR3C2. As to expression, highly expressed in the kidney.

Its subcellular location is the microsome. The protein localises to the endoplasmic reticulum. It carries out the reaction an 11beta-hydroxysteroid + NAD(+) = an 11-oxosteroid + NADH + H(+). The catalysed reaction is corticosterone + NAD(+) = 11-dehydrocorticosterone + NADH + H(+). The enzyme catalyses cortisol + NAD(+) = cortisone + NADH + H(+). It catalyses the reaction 11beta,17beta-dihydroxyandrost-4-ene-3-one + NAD(+) = 17beta-hydroxyandrost-4-ene-3,11-dione + NADH + H(+). It carries out the reaction 11beta-hydroxyandrost-4-ene-3,17-dione + NAD(+) = androst-4-ene-3,11,17-trione + NADH + H(+). It participates in steroid metabolism. With respect to regulation, inhibited by carbenoloxone. Its function is as follows. Catalyzes the conversion of biologically active 11beta-hydroxyglucocorticoids (11beta-hydroxysteroid) such as corticosterone, to inactive 11-ketoglucocorticoids (11-oxosteroid) such as 11-dehydrocorticosterone, in the presence of NAD(+). Functions as a dehydrogenase (oxidase), thereby decreasing the concentration of active glucocorticoids, thus protecting the nonselective mineralocorticoid receptor from occupation by glucocorticoids. Plays an important role in maintaining glucocorticoids balance during preimplantation and protects the fetus from excessive maternal corticosterone exposure. Catalyzes the oxidation of 11beta-hydroxytestosterone (11beta,17beta-dihydroxyandrost-4-ene-3-one) to 11-ketotestosterone (17beta-hydroxyandrost-4-ene-3,11-dione), a major bioactive androgen. Catalyzes the conversion of 11beta-hydroxyandrostenedione (11beta-hydroxyandrost-4-ene-3,17-dione) to 11-ketoandrostenedione (androst-4-ene-3,11,17-trione), which can be further metabolized to 11-ketotestosterone. Converts 7-beta-25-dihydroxycholesterol to 7-oxo-25-hydroxycholesterol in vitro. 7-beta-25-dihydroxycholesterol (not 7-oxo-25-hydroxycholesterol) acts as a ligand for the G-protein-coupled receptor (GPCR) Epstein-Barr virus-induced gene 2 (EBI2) and may thereby regulate immune cell migration. May protect ovulating oocytes and fertilizing spermatozoa from the adverse effects of cortisol. The sequence is that of 11-beta-hydroxysteroid dehydrogenase type 2 (HSD11B2) from Oryctolagus cuniculus (Rabbit).